Here is an 856-residue protein sequence, read N- to C-terminus: Rod cGMP-specific 3',5'-cyclic phosphodiesterase subunit beta (856 aa).

Position 2 is an N-acetylserine (Ser2). GAF domains lie at 71–220 (NMER…TLNL) and 252–429 (DIER…GWSV). The PDEase domain maps to 481-814 (EEDELGILLK…KEWKALADEY (334 aa)). The Proton donor role is filled by His557. A divalent metal cation contacts are provided by His561, His597, Asp598, and Asp718. Basic and acidic residues predominate over residues 823–833 (EEKQQQEDRTT). The disordered stretch occupies residues 823–842 (EEKQQQEDRTTAKKAGTEIC). Cys853 carries the S-geranylgeranyl cysteine lipid modification. Positions 854 to 856 (CIL) are cleaved as a propeptide — removed in mature form.

It belongs to the cyclic nucleotide phosphodiesterase family. Oligomer composed of two catalytic chains (alpha and beta), an inhibitory chain (gamma) and the delta chain. A divalent metal cation serves as cofactor.

The protein resides in the membrane. The protein localises to the cell projection. Its subcellular location is the cilium. It localises to the photoreceptor outer segment. It catalyses the reaction 3',5'-cyclic GMP + H2O = GMP + H(+). In terms of biological role, rod-specific cGMP phosphodiesterase that catalyzes the hydrolysis of 3',5'-cyclic GMP. Necessary for the formation of a functional phosphodiesterase holoenzyme. Involved in retinal circadian rhythm photoentrainment via modulation of UVA and orange light-induced phase-shift of the retina clock. May participate in processes of transmission and amplification of the visual signal. This is Rod cGMP-specific 3',5'-cyclic phosphodiesterase subunit beta from Canis lupus familiaris (Dog).